A 335-amino-acid polypeptide reads, in one-letter code: Probable E3 ubiquitin-protein ligase BAH1-like (335 aa).

The SPX domain maps to 1–163 (MKFGETFTEY…SSENGKNFKL (163 aa)). Residues 231–280 (CAICLETVFNPYALKCGHIFCNSCACSAASVLIFQGIKAAPRHSKCPICR) form an RING-type zinc finger.

Belongs to the RING-type zinc finger family.

It carries out the reaction S-ubiquitinyl-[E2 ubiquitin-conjugating enzyme]-L-cysteine + [acceptor protein]-L-lysine = [E2 ubiquitin-conjugating enzyme]-L-cysteine + N(6)-ubiquitinyl-[acceptor protein]-L-lysine.. The protein operates within protein modification; protein ubiquitination. This chain is Probable E3 ubiquitin-protein ligase BAH1-like (RF178), found in Arabidopsis thaliana (Mouse-ear cress).